Reading from the N-terminus, the 284-residue chain is Pantothenate synthetase (284 aa).

30 to 37 (MGALHNGH) is a binding site for ATP. His37 functions as the Proton donor in the catalytic mechanism. Gln61 is a (R)-pantoate binding site. A beta-alanine-binding site is contributed by Gln61. ATP is bound at residue 147-150 (GEKD). A (R)-pantoate-binding site is contributed by Gln153. ATP-binding positions include Leu176 and 184–187 (SSSR).

Belongs to the pantothenate synthetase family. In terms of assembly, homodimer.

It is found in the cytoplasm. The enzyme catalyses (R)-pantoate + beta-alanine + ATP = (R)-pantothenate + AMP + diphosphate + H(+). The protein operates within cofactor biosynthesis; (R)-pantothenate biosynthesis; (R)-pantothenate from (R)-pantoate and beta-alanine: step 1/1. In terms of biological role, catalyzes the condensation of pantoate with beta-alanine in an ATP-dependent reaction via a pantoyl-adenylate intermediate. In Bartonella henselae (strain ATCC 49882 / DSM 28221 / CCUG 30454 / Houston 1) (Rochalimaea henselae), this protein is Pantothenate synthetase.